Consider the following 416-residue polypeptide: Pentraxin fusion protein (416 aa).

Residues 1–14 (MKSLLLFLKSQVFG) form the signal peptide. Asparagine 129 is a glycosylation site (N-linked (GlcNAc...) asparagine). Positions 184-206 (GTEASDSSESVDGTEAPASPESD) are disordered. The 197-residue stretch at 220–416 (TNKSFMFPKE…YSMIGNVAEV (197 aa)) folds into the Pentraxin (PTX) domain. The N-linked (GlcNAc...) asparagine glycan is linked to asparagine 221. The cysteines at positions 251 and 311 are disulfide-linked. Ca(2+) contacts are provided by aspartate 275, glutamine 353, aspartate 354, and glutamine 364.

Ca(2+) serves as cofactor.

The polypeptide is Pentraxin fusion protein (pxn1) (Xenopus laevis (African clawed frog)).